The following is a 264-amino-acid chain: ATP synthase subunit a (264 aa).

Helical transmembrane passes span 39–59 (LDTL…FYIV), 97–117 (VAPL…MDLV), 139–159 (TADP…VIFY), 205–225 (LFGN…LPWW), and 239–259 (LLVI…YISL).

Belongs to the ATPase A chain family. F-type ATPases have 2 components, CF(1) - the catalytic core - and CF(0) - the membrane proton channel. CF(1) has five subunits: alpha(3), beta(3), gamma(1), delta(1), epsilon(1). CF(0) has three main subunits: a(1), b(2) and c(9-12). The alpha and beta chains form an alternating ring which encloses part of the gamma chain. CF(1) is attached to CF(0) by a central stalk formed by the gamma and epsilon chains, while a peripheral stalk is formed by the delta and b chains.

The protein localises to the cell inner membrane. Its function is as follows. Key component of the proton channel; it plays a direct role in the translocation of protons across the membrane. This chain is ATP synthase subunit a, found in Coxiella burnetii (strain Dugway 5J108-111).